The following is a 145-amino-acid chain: RNA polymerase-binding transcription factor DksA (145 aa).

4 residues coordinate Zn(2+): cysteine 108, cysteine 111, cysteine 129, and cysteine 132. The dksA C4-type zinc-finger motif lies at 108–132 (CDCCGEEIGIRRLEARPTADLCIDC).

Belongs to the DksA family. Interacts directly with the RNA polymerase.

The protein resides in the cytoplasm. Its function is as follows. Transcription factor that acts by binding directly to the RNA polymerase (RNAP). Required for negative regulation of rRNA expression and positive regulation of several amino acid biosynthesis promoters. Also required for regulation of fis expression. The sequence is that of RNA polymerase-binding transcription factor DksA from Haemophilus influenzae (strain ATCC 51907 / DSM 11121 / KW20 / Rd).